The sequence spans 231 residues: CLAVATA3/ESR (CLE)-related protein 4B-2 (231 aa).

A signal peptide spans 1–21; that stretch reads MATNTMLCLLILSVVLALAFA. Residues 21-83 form a required for secretion from the host cytoplasm to the host apoplasm region; the sequence is ATNKKGDEEP…SNQLPNNNWM (63 aa). Asparagine 32 carries N-linked (GlcNAc...) asparagine glycosylation. Residues 116–231 are disordered; that stretch reads RKTGMHSQRH…APAGPDPIHH (116 aa). 2 stretches are compositionally biased toward basic and acidic residues: residues 125–137 and 144–221; these read HHEE…EKRV and PIHH…EKRG. The stretch at 127 to 135 is one A-1 repeat; sequence EETTLEQEK. The interval 127-219 is 5 X approximate repeat A; that stretch reads EETTLEQEKR…HEETTFEQEK (93 aa). Residues 136 to 147 form a CLE-1 repeat; the sequence is RVAGAGPDPIHH. Residues 136–231 are 5 X approximate repeat CLE; that stretch reads RVAGAGPDPI…APAGPDPIHH (96 aa). One copy of the A-2 repeat lies at 148-156; the sequence is EETTLEQEK. The stretch at 157-168 is one CLE-2 repeat; it reads RAVPAGPDPKHH. The A-3 repeat unit spans residues 169 to 177; it reads EETTLEQEK. A CLE-3 repeat occupies 178-189; it reads RAVPAGPDPKHH. One copy of the A-4 repeat lies at 190–198; that stretch reads EETTLEQEK. The CLE-4 repeat unit spans residues 199–210; it reads RAVPAGPDPKHH. Residues 211-219 form an A-5 repeat; that stretch reads EETTFEQEK. The stretch at 220–231 is one CLE-5 repeat; that stretch reads RGAPAGPDPIHH.

This sequence belongs to the CLV3/ESR signal peptide family. Highly expressed exclusively within the dorsal esophageal gland cell during syncytium formation in host plants.

The protein localises to the secreted. The protein resides in the host cytoplasm. Its subcellular location is the host extracellular space. It localises to the extracellular space. It is found in the apoplast. Mimics host plant CLE extracellular signal peptides that regulate cell fate. May play a role in the differentiation or division of feeding cells (syncytia) induced in plant roots during infection. The chain is CLAVATA3/ESR (CLE)-related protein 4B-2 (CLE-4B-2) from Globodera rostochiensis (Golden nematode worm).